The sequence spans 798 residues: Phenylalanine--tRNA ligase beta subunit (798 aa).

In terms of domain architecture, tRNA-binding spans 39 to 148; the sequence is SKHLGGFVVG…VTLAVGASLL (110 aa). Positions 401-476 constitute a B5 domain; the sequence is DWQKSIVLRP…RINGYDNIPA (76 aa). Asp454, Asp460, Glu463, and Glu464 together coordinate Mg(2+). An FDX-ACB domain is found at 704–797; the sequence is SALQPLDRDF…VAKATGGELR (94 aa).

The protein belongs to the phenylalanyl-tRNA synthetase beta subunit family. Type 1 subfamily. As to quaternary structure, tetramer of two alpha and two beta subunits. Mg(2+) is required as a cofactor.

It localises to the cytoplasm. The enzyme catalyses tRNA(Phe) + L-phenylalanine + ATP = L-phenylalanyl-tRNA(Phe) + AMP + diphosphate + H(+). The polypeptide is Phenylalanine--tRNA ligase beta subunit (Paramagnetospirillum magneticum (strain ATCC 700264 / AMB-1) (Magnetospirillum magneticum)).